The primary structure comprises 275 residues: Hydroxyethylthiazole kinase (275 aa).

A substrate-binding site is contributed by Met-50. ATP-binding residues include Arg-126 and Ser-171. Residue Ala-200 coordinates substrate.

It belongs to the Thz kinase family. Mg(2+) is required as a cofactor.

The catalysed reaction is 5-(2-hydroxyethyl)-4-methylthiazole + ATP = 4-methyl-5-(2-phosphooxyethyl)-thiazole + ADP + H(+). It functions in the pathway cofactor biosynthesis; thiamine diphosphate biosynthesis; 4-methyl-5-(2-phosphoethyl)-thiazole from 5-(2-hydroxyethyl)-4-methylthiazole: step 1/1. Functionally, catalyzes the phosphorylation of the hydroxyl group of 4-methyl-5-beta-hydroxyethylthiazole (THZ). This is Hydroxyethylthiazole kinase from Acinetobacter baumannii (strain AB307-0294).